Reading from the N-terminus, the 252-residue chain is Small ribosomal subunit protein eS1B (252 aa).

Alanine 2 bears the N-acetylalanine; partial mark. Serine 251 is modified (phosphoserine).

Belongs to the eukaryotic ribosomal protein eS1 family. As to quaternary structure, component of the small ribosomal subunit (SSU). Mature yeast ribosomes consist of a small (40S) and a large (60S) subunit. The 40S small subunit contains 1 molecule of ribosomal RNA (18S rRNA) and at least 33 different proteins. The large 60S subunit contains 3 rRNA molecules (25S, 5.8S and 5S rRNA) and at least 46 different proteins. eS1 interacts directly with uS11 and eS26, which form part of the mRNA exit tunnel.

It is found in the cytoplasm. Functionally, component of the ribosome, a large ribonucleoprotein complex responsible for the synthesis of proteins in the cell. The small ribosomal subunit (SSU) binds messenger RNAs (mRNAs) and translates the encoded message by selecting cognate aminoacyl-transfer RNA (tRNA) molecules. The large subunit (LSU) contains the ribosomal catalytic site termed the peptidyl transferase center (PTC), which catalyzes the formation of peptide bonds, thereby polymerizing the amino acids delivered by tRNAs into a polypeptide chain. The nascent polypeptides leave the ribosome through a tunnel in the LSU and interact with protein factors that function in enzymatic processing, targeting, and the membrane insertion of nascent chains at the exit of the ribosomal tunnel. The polypeptide is Small ribosomal subunit protein eS1B (rps102) (Schizosaccharomyces pombe (strain 972 / ATCC 24843) (Fission yeast)).